A 432-amino-acid polypeptide reads, in one-letter code: 3-phosphoshikimate 1-carboxyvinyltransferase (432 aa).

3 residues coordinate 3-phosphoshikimate: Lys23, Ser24, and Arg28. Residue Lys23 coordinates phosphoenolpyruvate. Phosphoenolpyruvate-binding residues include Gly95 and Arg123. Residues Ser167, Gln169, Asp317, and Lys344 each contribute to the 3-phosphoshikimate site. Position 169 (Gln169) interacts with phosphoenolpyruvate. Asp317 (proton acceptor) is an active-site residue. Positions 348 and 390 each coordinate phosphoenolpyruvate.

It belongs to the EPSP synthase family. Monomer.

It is found in the cytoplasm. It catalyses the reaction 3-phosphoshikimate + phosphoenolpyruvate = 5-O-(1-carboxyvinyl)-3-phosphoshikimate + phosphate. It participates in metabolic intermediate biosynthesis; chorismate biosynthesis; chorismate from D-erythrose 4-phosphate and phosphoenolpyruvate: step 6/7. Functionally, catalyzes the transfer of the enolpyruvyl moiety of phosphoenolpyruvate (PEP) to the 5-hydroxyl of shikimate-3-phosphate (S3P) to produce enolpyruvyl shikimate-3-phosphate and inorganic phosphate. The sequence is that of 3-phosphoshikimate 1-carboxyvinyltransferase from Staphylococcus aureus (strain MRSA252).